A 385-amino-acid polypeptide reads, in one-letter code: F-box only protein 4 (385 aa).

2 positions are modified to phosphoserine: Ser11 and Ser46. The F-box domain maps to 54-100; the sequence is TSALTRLPVDVQLYILSFLSPHDLCQLGSTDHYWNKTIRDPILWRYF.

In terms of assembly, homodimer. Part of the SCF (SKP1-CUL1-F-box) E3 ubiquitin-protein ligase complex SCF(FBXO4) formed of CUL1, SKP1, RBX1 and FBXO4. Interacts with TERF1; this interaction is prevented in the presence of GNL3L. Identified in a complex with CRYAB and CCND1. Post-translationally, phosphorylation at Ser-11 varies during the cell cycle. It is low in resting cells and high in the S phase and the G2/M phase of the cell cycle. Phosphorylation is decreased during late G1 phase. Phosphorylation at Ser-11 is important for homodimerization and for optimal ubiquitin ligase activity towards CCND1.

The protein localises to the cytoplasm. The protein operates within protein modification; protein ubiquitination. Functionally, substrate recognition component of a SCF (SKP1-CUL1-F-box protein) E3 ubiquitin-protein ligase complex that mediates the ubiquitination and subsequent proteasomal degradation of target proteins. Promotes ubiquitination of cyclin-D1 (CCND1) and its subsequent proteasomal degradation. However, it does not act as a major regulator of CCND1 stability during the G1/S transition. Recognizes TERF1 and promotes its ubiquitination together with UBE2D1. Promotes ubiquitination of FXR1 following phosphorylation of FXR1 by GSK3B, leading to FXR1 degradation by the proteasome. The chain is F-box only protein 4 from Mus musculus (Mouse).